The following is a 264-amino-acid chain: Teichoic acids export ATP-binding protein TagH (264 aa).

An ABC transporter domain is found at 22-243; that stretch reads ERLKDVIVPF…YEKFLNDFKK (222 aa). 57-64 is an ATP binding site; that stretch reads GINGSGKS.

Belongs to the ABC transporter superfamily. Teichoic acids exporter (TC 3.A.1.104.1) family. The complex is composed of two ATP-binding proteins (TagH) and two transmembrane proteins (TagG).

The protein resides in the cell membrane. It carries out the reaction ATP + H2O + teichoic acidSide 1 = ADP + phosphate + teichoic acidSide 2.. In terms of biological role, part of the ABC transporter complex TagGH involved in teichoic acids export. Responsible for energy coupling to the transport system. The polypeptide is Teichoic acids export ATP-binding protein TagH (Staphylococcus saprophyticus subsp. saprophyticus (strain ATCC 15305 / DSM 20229 / NCIMB 8711 / NCTC 7292 / S-41)).